The primary structure comprises 579 residues: DELLA protein RGA2 (579 aa).

The disordered stretch occupies residues 1 to 31; sequence MKRDLHQFQGPPDTRFPNHGTANTGSSSKDK. Positions 45 to 49 match the DELLA motif motif; the sequence is DELLA. Composition is skewed to low complexity over residues 149–162 and 174–183; these read SSSS…NSQS and SLVTGTTVTT. The disordered stretch occupies residues 149–183; it reads SSSSSNQAGDNSQSTKRLKSCSSPDSLVTGTTVTT. The GRAS domain maps to 205 to 574; sequence VDSQENGVRL…RPLITTSAWK (370 aa). The segment at 212 to 266 is leucine repeat I (LRI); sequence VRLVHALMACAEAIQNNDLSIAEALVKQIGFLAVSQAGAMRKVATYFAEALARRI. The VHIID stretch occupies residues 285-350; that stretch reads QMHFYETCPY…GGPPVFRLTG (66 aa). A VHIID motif is present at residues 316 to 320; that stretch reads VHVID. The tract at residues 364 to 396 is leucine repeat II (LRII); the sequence is EVGCKLAQLAEAIHVEFEYRGFVANSLADLDAS. Positions 408–495 are PFYRE; that stretch reads VAVNSVFELH…EVYLGKQICN (88 aa). Residues 416–420 carry the LXXLL motif motif; that stretch reads LHKLL. The segment at 498–574 is SAW; the sequence is ACEGPDRVER…RPLITTSAWK (77 aa).

This sequence belongs to the GRAS family. DELLA subfamily. In terms of processing, phosphorylated. Ubiquitinated. Upon GA application it is ubiquitinated, leading to its subsequent degradation.

The protein resides in the nucleus. Probable transcriptional regulator that acts as a repressor of the gibberellin (GA) signaling pathway. Probably acts by participating in large multiprotein complexes that represses transcription of GA-inducible genes. Upon GA application, it is degraded by the proteasome, allowing the GA signaling pathway. This chain is DELLA protein RGA2 (RGA2), found in Brassica campestris (Field mustard).